Reading from the N-terminus, the 205-residue chain is MHQTHDIQILPAPVIRLIEELNRLPGVGPKTASRLTFFLLRAPDDLPLALAHALTALKQQVQLCSRCYFITQGDLCAICANPARDQRVICVVEEPLDVVAIERTGVYRGLYHVLHGRIAPLEGMNREDIYFDELLDRVRAEPVEEVIIATNPNLEGEATAFHLQRALAPLGVRVTRLARGLPTGGDLEWADPGTLGSALEGRREM.

A C4-type zinc finger spans residues 64–79 (CSRCYFITQGDLCAIC). In terms of domain architecture, Toprim spans 87–182 (RVICVVEEPL…RVTRLARGLP (96 aa)).

It belongs to the RecR family.

May play a role in DNA repair. It seems to be involved in an RecBC-independent recombinational process of DNA repair. It may act with RecF and RecO. This chain is Recombination protein RecR, found in Roseiflexus sp. (strain RS-1).